The chain runs to 241 residues: Cytochrome b6-f complex iron-sulfur subunit 2, cyanelle (241 aa).

The N-terminal 62 residues, 1 to 62 (MSAFACSAVA…AAKATTFSIS (62 aa)), are a transit peptide targeting the cyanelle. The chain crosses the membrane as a helical span at residues 83–103 (LLGAIAGPTIGAGGPFVSFLV). Residues 127-223 (VEKWLETXKP…VNVLEDGVVA (97 aa)) enclose the Rieske domain. Residues C169, H171, C187, and H190 each contribute to the [2Fe-2S] cluster site. C174 and C189 are oxidised to a cystine.

The protein belongs to the Rieske iron-sulfur protein family. As to quaternary structure, the 4 large subunits of the cytochrome b6-f complex are cytochrome b6, subunit IV (17 kDa polypeptide, petD), cytochrome f and the Rieske protein, while the 4 small subunits are petG, petL, petM and petN. The complex functions as a dimer. [2Fe-2S] cluster is required as a cofactor.

It is found in the plastid. The protein localises to the cyanelle thylakoid membrane. It catalyses the reaction 2 oxidized [plastocyanin] + a plastoquinol + 2 H(+)(in) = 2 reduced [plastocyanin] + a plastoquinone + 4 H(+)(out). Component of the cytochrome b6-f complex, which mediates electron transfer between photosystem II (PSII) and photosystem I (PSI), cyclic electron flow around PSI, and state transitions. The chain is Cytochrome b6-f complex iron-sulfur subunit 2, cyanelle (petC-2) from Cyanophora paradoxa.